Consider the following 1024-residue polypeptide: Multidrug resistance protein MdtC (1024 aa).

The next 12 membrane-spanning stretches (helical) occupy residues 12–32 (VATT…FSLL), 333–353 (EVER…FIFL), 360–380 (LIPA…MYLC), 387–407 (LSLM…IVVL), 435–455 (VLSM…MAGL), 469–489 (VAIG…CAWL), 528–548 (WVMV…ISIP), 853–873 (LWLI…LYES), 875–895 (VHPL…LLAL), 897–917 (LFDA…IGIV), 953–973 (PIIM…LSSG), and 984–1004 (ITIV…TPVI).

This sequence belongs to the resistance-nodulation-cell division (RND) (TC 2.A.6) family. MdtC subfamily. As to quaternary structure, part of a tripartite efflux system composed of MdtA, MdtB and MdtC. MdtC forms a heteromultimer with MdtB.

The protein localises to the cell inner membrane. The polypeptide is Multidrug resistance protein MdtC (Yersinia pseudotuberculosis serotype IB (strain PB1/+)).